A 336-amino-acid polypeptide reads, in one-letter code: N-lysine methyltransferase KMT5A-B (336 aa).

2 disordered regions span residues 1-107 and 141-165; these read MGRG…SSKQ and QSQK…NRKL. Basic and acidic residues predominate over residues 67–93; it reads SVAHHESKNLGKPTTETRKKAEVEKKR. Polar residues predominate over residues 95 to 104; the sequence is SSATELSVKS. Basic residues predominate over residues 146–162; it reads VKNKSQRRKAQRKKSPN. One can recognise an SET domain in the interval 200 to 321; sequence DGMKMDMIIG…VGEELLYDYG (122 aa). S-adenosyl-L-methionine contacts are provided by residues 210–212, Y255, and 282–283; these read KGR and NH.

It belongs to the class V-like SAM-binding methyltransferase superfamily. Histone-lysine methyltransferase family. PR/SET subfamily. Phosphorylated during mitosis.

It is found in the nucleus. The protein resides in the chromosome. It carries out the reaction L-lysyl(20)-[histone H4] + S-adenosyl-L-methionine = N(6)-methyl-L-lysyl(20)-[histone H4] + S-adenosyl-L-homocysteine + H(+). It catalyses the reaction L-lysyl-[protein] + S-adenosyl-L-methionine = N(6)-methyl-L-lysyl-[protein] + S-adenosyl-L-homocysteine + H(+). Its function is as follows. Protein-lysine N-methyltransferase that monomethylates both histones and non-histone proteins. Specifically monomethylates 'Lys-20' of histone H4 (H4K20me1). H4K20me1 is enriched during mitosis and represents a specific tag for epigenetic transcriptional repression. Mainly functions in euchromatin regions, thereby playing a central role in the silencing of euchromatic genes. Required for cell proliferation, probably by contributing to the maintenance of proper higher-order structure of DNA during mitosis. Involved in chromosome condensation and proper cytokinesis. The sequence is that of N-lysine methyltransferase KMT5A-B from Xenopus laevis (African clawed frog).